A 400-amino-acid chain; its full sequence is Large envelope protein (400 aa).

Met1 is subject to N-acetylmethionine. The segment at 1-20 (MGGWSAKPRKGMGTNLSVPN) is disordered. Gly2 is lipidated: N-myristoyl glycine; by host. The pre-S1 stretch occupies residues 2–119 (GGWSAKPRKG…PPLRDSHPQA (118 aa)). The pre-S stretch occupies residues 2-174 (GGWSAKPRKG…SSRTGDPALN (173 aa)). At 2-181 (GGWSAKPRKG…ALNMENITSG (180 aa)) the chain is on the virion surface; in external conformation side. Residues 2–253 (GGWSAKPRKG…PGYRWMCLRR (252 aa)) are Intravirion; in internal conformation-facing. Trp4 is a glycosylation site (N-linked (GlcNAc...) asparagine). Positions 120-174 (MQWNSTAFQQALQDPRVRGLFFPAGGSSSGTVNPAPNIASHISSISSRTGDPALN) are pre-S2. Residues 182–202 (FLGPLLVLQAGFFLLTRILTI) traverse the membrane as a helical segment. Residues 203-253 (PQSLDSWWTSLNFLGGSPVCLGQNSQSPTSNHSPTSCPPICPGYRWMCLRR) are Intravirion; in external conformation-facing. A helical membrane pass occupies residues 254 to 274 (FIIFLFILLLCLIFLLVLLDY). The Virion surface segment spans residues 275-348 (QGMLPVCPLI…WASVRFSWLS (74 aa)). Asn320 is a glycosylation site (N-linked (GlcNAc...) asparagine; by host). A helical transmembrane segment spans residues 349–369 (LLVPFVQWFVGLSPTVWLSVI). At 370–375 (WMMWYW) the chain is on the intravirion side. The helical transmembrane segment at 376–398 (GPSLYNILSPFIPLLPIFFCLWV) threads the bilayer. Over 399–400 (YI) the chain is Virion surface.

Belongs to the orthohepadnavirus major surface antigen family. As to quaternary structure, in its internal form (Li-HBsAg), interacts with the capsid protein and with the isoform S. Interacts with host chaperone CANX. In terms of assembly, associates with host chaperone CANX through its pre-S2 N glycan; this association may be essential for isoform M proper secretion. Interacts with isoform L. Interacts with the antigens of satellite virus HDV (HDVAgs); this interaction is required for encapsidation of HDV genomic RNA. In terms of processing, isoform M is N-terminally acetylated by host at a ratio of 90%, and N-glycosylated by host at the pre-S2 region. Post-translationally, myristoylated.

The protein localises to the virion membrane. The large envelope protein exists in two topological conformations, one which is termed 'external' or Le-HBsAg and the other 'internal' or Li-HBsAg. In its external conformation the protein attaches the virus to cell receptors and thereby initiating infection. This interaction determines the species specificity and liver tropism. This attachment induces virion internalization predominantly through caveolin-mediated endocytosis. The large envelope protein also assures fusion between virion membrane and endosomal membrane. In its internal conformation the protein plays a role in virion morphogenesis and mediates the contact with the nucleocapsid like a matrix protein. Its function is as follows. The middle envelope protein plays an important role in the budding of the virion. It is involved in the induction of budding in a nucleocapsid independent way. In this process the majority of envelope proteins bud to form subviral lipoprotein particles of 22 nm of diameter that do not contain a nucleocapsid. The protein is Large envelope protein of Hepatitis B virus genotype A1 subtype adw2 (isolate Southern-Africa/Cai) (HBV-A).